We begin with the raw amino-acid sequence, 591 residues long: Complement component C8 beta chain (591 aa).

The first 32 residues, Met1–Gly32, serve as a signal peptide directing secretion. A propeptide spanning residues Glu33–Arg54 is cleaved from the precursor. Positions Asp64 to Gly117 constitute a TSP type-1 1 domain. 7 disulfides stabilise this stretch: Cys65-Cys100, Cys76-Cys110, Cys79-Cys116, Cys122-Cys133, Cys127-Cys146, Cys140-Cys155, and Cys162-Cys200. Residues Trp70 and Trp73 are each glycosylated (C-linked (Man) tryptophan). Asn101 carries an N-linked (GlcNAc...) asparagine glycan. The 38-residue stretch at Val120–Arg157 folds into the LDL-receptor class A domain. Residues Leu138, Asn141, Asp143, Asp145, Asp151, and Glu152 each contribute to the Ca(2+) site. Positions Ile158–His504 constitute an MACPF domain. Asn243 carries N-linked (GlcNAc...) asparagine glycosylation. Transmembrane regions (beta stranded) follow at residues Ser252–Lys259, Gly262–Ser269, Ala379–Gly386, and Val392–Ser399. Cys378 and Cys403 are oxidised to a cystine. Thr418 carries the post-translational modification Phosphothreonine. 4 disulfide bridges follow: Cys503–Cys550, Cys505–Cys521, Cys508–Cys523, and Cys525–Cys534. The region spanning Cys505 to Glu535 is the EGF-like domain. Residues Asp545–Ser591 form the TSP type-1 2 domain. C-linked (Man) tryptophan glycosylation is found at Trp551 and Trp554. Cysteines 557 and 590 form a disulfide. The disordered stretch occupies residues Cys568 to Ser591.

Belongs to the complement C6/C7/C8/C9 family. As to quaternary structure, heterotrimer of 3 chains: alpha (C8A), beta (C8B) and gamma (C8G); the alpha and gamma chains are disulfide bonded. Component of the membrane attack complex (MAC), composed of complement C5b, C6, C7, C8A, C8B, C8G and multiple copies of the pore-forming subunit C9. In terms of processing, N-glycosylated; contains one or two bound glycans. Not O-glycosylated.

It is found in the secreted. The protein localises to the target cell membrane. Membrane attack complex (MAC) assembly is inhibited by CD59, thereby protecting self-cells from damage during complement activation. CD59 acts by binding to the beta-haipins of C8 (C8A and C8B), forming an intermolecular beta-sheet that prevents incorporation of the multiple copies of C9 required for complete formation of the osmolytic pore. MAC assembly is also inhibited by clusterin (CLU) chaperones that inhibit polymerization of C9. Component of the membrane attack complex (MAC), a multiprotein complex activated by the complement cascade, which inserts into a target cell membrane and forms a pore, leading to target cell membrane rupture and cell lysis. The MAC is initiated by proteolytic cleavage of C5 into complement C5b in response to the classical, alternative, lectin and GZMK complement pathways. The complement pathways consist in a cascade of proteins that leads to phagocytosis and breakdown of pathogens and signaling that strengthens the adaptive immune system. C8B, together with C8A and C8G, inserts into the target membrane, but does not form pores by itself. During MAC assembly, associates with C5b, C6 and C7 to form the C5b8 intermediate complex that inserts into the target membrane and traverses the bilayer increasing membrane rigidity. The sequence is that of Complement component C8 beta chain from Homo sapiens (Human).